The sequence spans 507 residues: ATP synthase subunit alpha, chloroplastic (507 aa).

Residue 170–177 (GDRQTGKT) participates in ATP binding. At Thr-257 the chain carries Phosphothreonine.

This sequence belongs to the ATPase alpha/beta chains family. In terms of assembly, F-type ATPases have 2 components, CF(1) - the catalytic core - and CF(0) - the membrane proton channel. CF(1) has five subunits: alpha(3), beta(3), gamma(1), delta(1), epsilon(1). CF(0) has four main subunits: a, b, b' and c.

It is found in the plastid. The protein resides in the chloroplast thylakoid membrane. It carries out the reaction ATP + H2O + 4 H(+)(in) = ADP + phosphate + 5 H(+)(out). Produces ATP from ADP in the presence of a proton gradient across the membrane. The alpha chain is a regulatory subunit. The protein is ATP synthase subunit alpha, chloroplastic of Barbarea verna (Land cress).